The chain runs to 156 residues: Small ribosomal subunit protein uS7 (156 aa).

This sequence belongs to the universal ribosomal protein uS7 family. Part of the 30S ribosomal subunit. Contacts proteins S9 and S11.

One of the primary rRNA binding proteins, it binds directly to 16S rRNA where it nucleates assembly of the head domain of the 30S subunit. Is located at the subunit interface close to the decoding center, probably blocks exit of the E-site tRNA. In Trichormus variabilis (strain ATCC 29413 / PCC 7937) (Anabaena variabilis), this protein is Small ribosomal subunit protein uS7.